Consider the following 614-residue polypeptide: Sodium- and chloride-dependent betaine transporter (614 aa).

At 1–44 the chain is on the cytoplasmic side; sequence MDRKVAVHEDGYPVVSWVPEEGEMMDQKGKDQVKDRGQWTNKME. Helical transmembrane passes span 45–65, 73–92, and 117–137; these read FVLSVAGEIIGLGNVWRFPYL, AFFIPYFIFFFSCGIPVFFL, and GIGMASVVIESYLNIYYIIIL. Residues 138–210 are Extracellular-facing; sequence AWALFYLFSS…SGIHDLGSLR (73 aa). C157 and C166 form a disulfide bridge. Residues N171 and N183 are each glycosylated (N-linked (GlcNAc...) asparagine). The next 9 membrane-spanning stretches (helical) occupy residues 211-229, 238-255, 291-308, 320-341, 374-393, 423-441, 458-478, 499-518, and 538-556; these read WELALCLLLAWIICYFCIW, VVYFTATFPYLMLIILLI, IFFSFAICQGCLTALGSY, IALCFLNSATSFVAGFVVFSIL, MPLSQLWSCLFFIMLLFLGL, VLILAISVLCYLMGLLLVT, GICLLFLSLFEVICIGWVYGA, ISWLFLTPGLCLATFFFSLS, and IGWLLAFSSMACVPLFIII. At 557–614 the chain is on the cytoplasmic side; sequence TFLKTQGSFKKRLRRLITPDPSLPQPGRRPPQDGSSAQNCSSSPAKQELIAWEKETHL. Residues 574 to 602 form a disordered region; it reads TPDPSLPQPGRRPPQDGSSAQNCSSSPAK. The span at 589–601 shows a compositional bias: polar residues; it reads DGSSAQNCSSSPA.

Belongs to the sodium:neurotransmitter symporter (SNF) (TC 2.A.22) family. SLC6A12 subfamily. In terms of assembly, interacts with LIN7C. In terms of tissue distribution, predominantly expressed in the liver (sinusoidal hepatocyte plasma membranes), also present in the renal medulla, where it localizes to the basolateral membranes of collecting ducts (particularly at the papilla tip) and the thick ascending limbs of Henle (at protein level). Some expression is detected in the leptomeninges, but no expression is detected in brain parenchyma, brain blood vessels, ependymal cells, the renal cortex and the intestine.

Its subcellular location is the basolateral cell membrane. It localises to the cell membrane. The enzyme catalyses 4-aminobutanoate(out) + chloride(out) + 3 Na(+)(out) = 4-aminobutanoate(in) + chloride(in) + 3 Na(+)(in). It catalyses the reaction glycine betaine(out) + 2 chloride(out) + 3 Na(+)(out) = glycine betaine(in) + 2 chloride(in) + 3 Na(+)(in). Transporter that mediates cellular uptake of betaine and GABA in a sodium- and chloride-dependent process. May have a role in regulation of GABAergic transmission in the brain through the reuptake of GABA into presynaptic terminals, as well as in osmotic regulation. Probably also involved in renal and hepatic osmotic regulation. In Mus musculus (Mouse), this protein is Sodium- and chloride-dependent betaine transporter (Slc6a12).